We begin with the raw amino-acid sequence, 380 residues long: Cytochrome b (380 aa).

A run of 4 helical transmembrane segments spans residues 34 to 54 (FGSL…LLAM), 78 to 99 (WLIR…FLHI), 114 to 134 (WNTG…GYVL), and 179 to 199 (FFAL…IHLT). Heme b is bound by residues histidine 84 and histidine 98. Histidine 183 and histidine 197 together coordinate heme b. Histidine 202 is a binding site for a ubiquinone. 4 consecutive transmembrane segments (helical) span residues 227-247 (IKDI…ALFS), 289-309 (LGGV…PFLH), 321-341 (LSQT…WIGS), and 348-368 (FIII…ILFP).

The protein belongs to the cytochrome b family. As to quaternary structure, the cytochrome bc1 complex contains 11 subunits: 3 respiratory subunits (MT-CYB, CYC1 and UQCRFS1), 2 core proteins (UQCRC1 and UQCRC2) and 6 low-molecular weight proteins (UQCRH/QCR6, UQCRB/QCR7, UQCRQ/QCR8, UQCR10/QCR9, UQCR11/QCR10 and a cleavage product of UQCRFS1). This cytochrome bc1 complex then forms a dimer. It depends on heme b as a cofactor.

Its subcellular location is the mitochondrion inner membrane. Component of the ubiquinol-cytochrome c reductase complex (complex III or cytochrome b-c1 complex) that is part of the mitochondrial respiratory chain. The b-c1 complex mediates electron transfer from ubiquinol to cytochrome c. Contributes to the generation of a proton gradient across the mitochondrial membrane that is then used for ATP synthesis. The chain is Cytochrome b (MT-CYB) from Coturnix japonica (Japanese quail).